The chain runs to 182 residues: MAEFPSKVNTRTSSPAQGGGAVVSTLSPDLGFVRSSLGALMLLQLVLGLLVWALIADTPYHLYPSYGWVMFVAVFLWLVTIIFFVLYLFQLHMKLYMVPWPLVLMVFNVGATVLYITAFITCSASVELTSLKGSQPYNQRAAASFFSCLVMIAYGVSAFLSFQAWRGVGSNAATSQMAGGYA.

The interval Met-1–Gly-20 is disordered. Residues Met-1–Ser-35 lie on the Cytoplasmic side of the membrane. Residues Lys-7–Ala-16 are compositionally biased toward polar residues. The MARVEL domain occupies Phe-32 to Arg-166. Residues Ser-36–Ala-56 form a helical membrane-spanning segment. Residues Asp-57–Trp-68 lie on the Extracellular side of the membrane. A helical membrane pass occupies residues Val-69–Phe-89. Residues Gln-90 to Pro-99 lie on the Cytoplasmic side of the membrane. The chain crosses the membrane as a helical span at residues Trp-100 to Ile-120. Topologically, residues Thr-121 to Ala-141 are extracellular. A helical transmembrane segment spans residues Ala-142–Phe-162. Topologically, residues Gln-163 to Ala-182 are cytoplasmic.

It belongs to the MAL family. Forms oligomers. Post-translationally, phosphorylated.

The protein resides in the cell membrane. It localises to the myelin membrane. It is found in the apical cell membrane. In terms of biological role, main component of the myelin sheath that plays an important role in myelin membrane biogenesis and myelination. Plays an essential function in apical endocytosis. Regulates epithelial development through the regulation of apical endocytosis. Part of the intracellular machinery that mediates basolateral-to-apical transport of ICAM-1, an essential adhesion receptor in epithelial cells, from the subapical compartment in hepatic epithelial cells. This is Plasmolipin (PLLP) from Bos taurus (Bovine).